The sequence spans 251 residues: Tropomyosin-2 (251 aa).

Residues 1–251 (MSGEEKLGKL…DTVADEPDDE (251 aa)) are a coiled coil.

Belongs to the tropomyosin family. In terms of assembly, homodimer. Striated muscle specific.

The polypeptide is Tropomyosin-2 (TPM2) (Podocoryna carnea (Hydrozoan)).